The sequence spans 230 residues: MRVEINADDYGLTKGVTDGIIKAHRGGCVTSTTLMMNGLSVEYAVEQAKSNPALKVGIHLVLTWGRPISNDVASLVQSNGKFRYTSSYREMDPPSLADVEKEWRAQIEEFKKTGLTLNHIDSHHHIHAWSPLTDVIIKLAKEFEVPVRYADTLKDYPEICWTEKIWVQFYQDGVNDNLFEQLKEEKVRSLEIMTHPGFVDEDLKENSSYLFTREKEVDVLCSIQIPEWVE.

2 residues coordinate Mg(2+): histidine 59 and histidine 123.

Belongs to the YdjC deacetylase family. As to quaternary structure, homodimer. The cofactor is Mg(2+).

In terms of biological role, probably catalyzes the deacetylation of acetylated carbohydrates an important step in the degradation of oligosaccharides. The sequence is that of Carbohydrate deacetylase from Oceanobacillus iheyensis (strain DSM 14371 / CIP 107618 / JCM 11309 / KCTC 3954 / HTE831).